A 335-amino-acid polypeptide reads, in one-letter code: NAC domain-containing protein 40 (335 aa).

Positions 14–156 (LFPGFRFSPT…ALVVCRLRKN (143 aa)) constitute an NAC domain. A DNA-binding region spans residues 112 to 162 (VGTKRTLVFHIGRAPRGERTEWIMHEYCIHGAPQDALVVCRLRKNADFRAS). The span at 245 to 254 (PTNPTHQETI) shows a compositional bias: polar residues. Positions 245-267 (PTNPTHQETISSESSSKRSKCGI) are disordered. A helical membrane pass occupies residues 313–333 (VLATTVFLAILFSFFWTVLIA).

Post-translationally, proteolytically cleaved, probably by metalloprotease activity. This cleavage mediates a translocation from the plasma membrane to the nucleus. In terms of tissue distribution, expressed in seeds, leaves, roots and inflorescence. Expressed in roots, rosette leaves, cauline leaves, shoot apex, stems and flowers.

It is found in the cell membrane. It localises to the nucleus. Transcriptional activator activated by proteolytic cleavage through regulated intramembrane proteolysis (RIP), probably via metalloprotease activity. Regulates gibberellic acid-mediated salt-responsive repression of seed germination and flowering via FT, thus delaying seed germination under high salinity conditions. This is NAC domain-containing protein 40 from Arabidopsis thaliana (Mouse-ear cress).